Reading from the N-terminus, the 325-residue chain is 8-oxo-dGDP phosphatase NUDT18 (325 aa).

One can recognise a Nudix hydrolase domain in the interval Asn38–Leu163. Leu55 lines the Mg(2+) pocket. Residues Gly73–Gly94 carry the Nudix box motif.

Belongs to the Nudix hydrolase family. It depends on Mn(2+) as a cofactor. Mg(2+) serves as cofactor.

The enzyme catalyses 8-oxo-dGDP + H2O = 8-oxo-dGMP + phosphate + H(+). It carries out the reaction 8-oxo-dADP + H2O = 8-oxo-dAMP + phosphate + H(+). It catalyses the reaction 2-oxo-dADP + H2O = 2-oxo-dAMP + phosphate + H(+). The catalysed reaction is 8-oxo-GDP + H2O = 8-oxo-GMP + phosphate + H(+). Functionally, mediates the hydrolysis of oxidized nucleoside diphosphate derivatives. Hydrolyzes 8-oxo-7,8-dihydroguanine (8-oxo-Gua)-containing deoxyribo- and ribonucleoside diphosphates to the monophosphates. Hydrolyzes 8-oxo-dGDP and 8-oxo-GDP with the same efficiencies. Also hydrolyzes 8-OH-dADP and 2-OH-dADP. Exhibited no or minimal hydrolysis activity against 8-oxo-dGTP, 8-oxo-GTP, dGTP, GTP, dGDP and GDP. Probably removes oxidized guanine nucleotides from both the DNA and RNA precursor pools. The sequence is that of 8-oxo-dGDP phosphatase NUDT18 (nudt18) from Danio rerio (Zebrafish).